We begin with the raw amino-acid sequence, 543 residues long: Chaperonin GroEL 4 (543 aa).

ATP contacts are provided by residues 29–32, 86–90, Gly411, 476–478, and Asp492; these read TLGP, DGTTT, and DAA.

This sequence belongs to the chaperonin (HSP60) family. Forms a cylinder of 14 subunits composed of two heptameric rings stacked back-to-back. Interacts with the co-chaperonin GroES.

It is found in the cytoplasm. The enzyme catalyses ATP + H2O + a folded polypeptide = ADP + phosphate + an unfolded polypeptide.. Together with its co-chaperonin GroES, plays an essential role in assisting protein folding. The GroEL-GroES system forms a nano-cage that allows encapsulation of the non-native substrate proteins and provides a physical environment optimized to promote and accelerate protein folding. This is Chaperonin GroEL 4 from Bradyrhizobium diazoefficiens (strain JCM 10833 / BCRC 13528 / IAM 13628 / NBRC 14792 / USDA 110).